The sequence spans 108 residues: uncharacterized protein (108 aa).

3 helical membrane passes run 10–32 (SLCYFSVFIAPIIVPIVAYFVVN), 45–67 (ISHIVPFVGWLFLFIALLGGAVA), and 77–99 (FVIIGGAVIYFLVVIGIIIWNVI).

Its subcellular location is the cell membrane. This is an uncharacterized protein from Bacillus subtilis (strain 168).